A 316-amino-acid polypeptide reads, in one-letter code: N-acetyl-gamma-glutamyl-phosphate reductase (316 aa).

The active site involves Cys136.

Belongs to the NAGSA dehydrogenase family. Type 1 subfamily.

The protein localises to the cytoplasm. The enzyme catalyses N-acetyl-L-glutamate 5-semialdehyde + phosphate + NADP(+) = N-acetyl-L-glutamyl 5-phosphate + NADPH + H(+). It functions in the pathway amino-acid biosynthesis; L-arginine biosynthesis; N(2)-acetyl-L-ornithine from L-glutamate: step 3/4. Catalyzes the NADPH-dependent reduction of N-acetyl-5-glutamyl phosphate to yield N-acetyl-L-glutamate 5-semialdehyde. The polypeptide is N-acetyl-gamma-glutamyl-phosphate reductase (Xanthomonas campestris pv. campestris (strain 8004)).